A 129-amino-acid polypeptide reads, in one-letter code: MSLKVDGFTSSIIFDVIRDGLNDPSQAKQKAESIKKANAIIVFNLKNKAGKTESWYLDLKNDGDVGKGNKSPKGDADIQLTLSDDHFQQLVEGKANAQRLFMTGKLKVKGNVMKAAAIEGILKNAQNNL.

The residue at position 2 (Ser-2) is an N-acetylserine. The SCP2 domain occupies 10-129 (SSIIFDVIRD…GILKNAQNNL (120 aa)). The Microbody targeting signal signature appears at 127–129 (NNL).

Monomer.

Its subcellular location is the peroxisome. Its function is as follows. May play a role in the transport of fatty acids. Binds fatty acids and fatty acyl-CoAs including palmitic acid, oleic acid, cis-parinaric acid and palmitoyl-CoA (in vitro). This Yarrowia lipolytica (strain CLIB 122 / E 150) (Yeast) protein is Fatty acid-binding protein (SCP2).